The chain runs to 173 residues: CASP-like protein 2D1 (173 aa).

At 1 to 9 the chain is on the cytoplasmic side; the sequence is MAPLLKLLD. The chain crosses the membrane as a helical span at residues 10 to 29; sequence SSLRVSVIPLSAATIWLTVT. At 30–50 the chain is on the extracellular side; sequence NHQDNSSYGNLKYSNIMGLKY. A glycan (N-linked (GlcNAc...) asparagine) is linked at N34. The helical transmembrane segment at 51-71 threads the bilayer; it reads MVCISAICASYAFVAAVSIWI. Residues 72 to 86 lie on the Cytoplasmic side of the membrane; it reads KCLVNKVWLFFVSDQ. A helical transmembrane segment spans residues 87–107; that stretch reads IIAYLMVTSVAAAMEILYIAY. Residues 108-131 are Extracellular-facing; that stretch reads NGDQKVTWSEACTSYGKFCNGMKT. Residues 132-152 traverse the membrane as a helical segment; it reads ALILHALTLCFFIVLAVISAY. At 153-173 the chain is on the cytoplasmic side; the sequence is RAFSMYQPPVSSKETVEGDAT.

It belongs to the Casparian strip membrane proteins (CASP) family. As to quaternary structure, homodimer and heterodimers.

Its subcellular location is the cell membrane. In Ricinus communis (Castor bean), this protein is CASP-like protein 2D1.